We begin with the raw amino-acid sequence, 1700 residues long: Balbiani ring protein 3 (1700 aa).

Positions 1–20 are cleaved as a signal peptide; sequence MKTLSSLLLVLAVNVLLIQA.

Salivary gland.

The protein resides in the secreted. In terms of biological role, used by the larvae to construct a supramolecular structure, the larval tube. Balbiani ring protein 3 could play a role as a transport protein that binds to other proteins intracellularly and in the gland lumen in order to prevent these from forming water-insoluble fibers too early. The protein is Balbiani ring protein 3 (BR3) of Chironomus tentans (Midge).